The chain runs to 187 residues: UPF0301 protein Cpha266_0885 (187 aa).

Belongs to the UPF0301 (AlgH) family.

The chain is UPF0301 protein Cpha266_0885 from Chlorobium phaeobacteroides (strain DSM 266 / SMG 266 / 2430).